Reading from the N-terminus, the 476-residue chain is Ubiquitin-conjugating enzyme E2 variant 3 (476 aa).

The UEV domain maps to 2-145 (EFSAETLRQQ…EEELPLYSLS (144 aa)). An NAD(+)-binding site is contributed by 185-213 (GDMALACLLAVSAKGTAGKLLLLDPTDGE).

This sequence in the N-terminal section; belongs to the ubiquitin-conjugating enzyme family. UEV subfamily. The protein in the C-terminal section; belongs to the LDH/MDH superfamily. In terms of assembly, homodimer.

Possible negative regulator of polyubiquitination. In Xenopus tropicalis (Western clawed frog), this protein is Ubiquitin-conjugating enzyme E2 variant 3 (uevld).